The primary structure comprises 465 residues: Soluble pyridine nucleotide transhydrogenase (465 aa).

35–44 (ERYNNVGGGC) serves as a coordination point for FAD.

It belongs to the class-I pyridine nucleotide-disulfide oxidoreductase family. FAD serves as cofactor.

It localises to the cytoplasm. The catalysed reaction is NAD(+) + NADPH = NADH + NADP(+). Its function is as follows. Conversion of NADPH, generated by peripheral catabolic pathways, to NADH, which can enter the respiratory chain for energy generation. This Photorhabdus laumondii subsp. laumondii (strain DSM 15139 / CIP 105565 / TT01) (Photorhabdus luminescens subsp. laumondii) protein is Soluble pyridine nucleotide transhydrogenase.